A 448-amino-acid chain; its full sequence is Methionine aminopeptidase 2-1 (448 aa).

The tract at residues 1-83 (MAAQVIPELQ…TQKAQTEPPR (83 aa)) is disordered. Positions 32-48 (ENEDGDSEDDNGDDQGA) are enriched in acidic residues. A compositionally biased stretch (basic residues) spans 59 to 73 (AKKKKKKKPKKKKKD). H198 lines the substrate pocket. A divalent metal cation-binding residues include D218, D229, and H298. Residue H306 coordinates substrate. A divalent metal cation contacts are provided by E334 and E429.

The protein belongs to the peptidase M24A family. Methionine aminopeptidase eukaryotic type 2 subfamily. It depends on Co(2+) as a cofactor. Zn(2+) is required as a cofactor. Mn(2+) serves as cofactor. The cofactor is Fe(2+).

The protein localises to the cytoplasm. It carries out the reaction Release of N-terminal amino acids, preferentially methionine, from peptides and arylamides.. Its function is as follows. Cotranslationally removes the N-terminal methionine from nascent proteins. The N-terminal methionine is often cleaved when the second residue in the primary sequence is small and uncharged (Met-Ala-, Cys, Gly, Pro, Ser, Thr, or Val). The sequence is that of Methionine aminopeptidase 2-1 from Ajellomyces capsulatus (strain G186AR / H82 / ATCC MYA-2454 / RMSCC 2432) (Darling's disease fungus).